The chain runs to 642 residues: Threonine--tRNA ligase (642 aa).

Positions methionine 1–threonine 61 constitute a TGS domain. The segment at aspartate 242–proline 535 is catalytic. Zn(2+)-binding residues include cysteine 333, histidine 384, and histidine 512.

The protein belongs to the class-II aminoacyl-tRNA synthetase family. In terms of assembly, homodimer. The cofactor is Zn(2+).

It localises to the cytoplasm. The catalysed reaction is tRNA(Thr) + L-threonine + ATP = L-threonyl-tRNA(Thr) + AMP + diphosphate + H(+). In terms of biological role, catalyzes the attachment of threonine to tRNA(Thr) in a two-step reaction: L-threonine is first activated by ATP to form Thr-AMP and then transferred to the acceptor end of tRNA(Thr). Also edits incorrectly charged L-seryl-tRNA(Thr). This is Threonine--tRNA ligase from Hydrogenovibrio crunogenus (strain DSM 25203 / XCL-2) (Thiomicrospira crunogena).